A 276-amino-acid polypeptide reads, in one-letter code: Probable endonuclease 4 (276 aa).

Zn(2+) is bound by residues His-66, His-106, Glu-141, Asp-175, His-178, His-210, Asp-223, His-225, and Glu-255.

This sequence belongs to the AP endonuclease 2 family. Zn(2+) serves as cofactor.

It carries out the reaction Endonucleolytic cleavage to 5'-phosphooligonucleotide end-products.. Endonuclease IV plays a role in DNA repair. It cleaves phosphodiester bonds at apurinic or apyrimidinic (AP) sites, generating a 3'-hydroxyl group and a 5'-terminal sugar phosphate. The polypeptide is Probable endonuclease 4 (Heliobacterium modesticaldum (strain ATCC 51547 / Ice1)).